A 263-amino-acid chain; its full sequence is Trans-aconitate 2-methyltransferase (263 aa).

It belongs to the methyltransferase superfamily. Tam family.

The protein resides in the cytoplasm. The catalysed reaction is trans-aconitate + S-adenosyl-L-methionine = (E)-3-(methoxycarbonyl)pent-2-enedioate + S-adenosyl-L-homocysteine. Its function is as follows. Catalyzes the S-adenosylmethionine monomethyl esterification of trans-aconitate. The chain is Trans-aconitate 2-methyltransferase from Mycobacterium marinum (strain ATCC BAA-535 / M).